We begin with the raw amino-acid sequence, 363 residues long: Adenylate cyclase 2 (363 aa).

One can recognise a Guanylate cyclase domain in the interval 157-286 (VFLFIDLAGS…DTVNTTARLE (130 aa)). 2 residues coordinate Mg(2+): Asp-162 and Asp-206. A disordered region spans residues 341-363 (GDGATEPAGETVRSPAAEAFTSL).

Belongs to the adenylyl cyclase class-3 family. Mg(2+) is required as a cofactor.

The enzyme catalyses ATP = 3',5'-cyclic AMP + diphosphate. In terms of biological role, plays essential roles in regulation of cellular metabolism by catalyzing the synthesis of a second messenger, cAMP. In Rhizobium meliloti (strain 1021) (Ensifer meliloti), this protein is Adenylate cyclase 2 (cya2).